A 660-amino-acid chain; its full sequence is Bifunctional polymyxin resistance protein ArnA (660 aa).

The tract at residues 1–304 (MKAVVFAYHD…TLGLVAGAII (304 aa)) is formyltransferase ArnAFT. His104 acts as the Proton donor; for formyltransferase activity in catalysis. (6R)-10-formyltetrahydrofolate contacts are provided by residues Arg114 and 136–140 (VSRAD). Residues 314–660 (RRTRVLILGV…KTVELTEPQA (347 aa)) are dehydrogenase ArnADH. Residues Asp347 and 368-369 (DI) contribute to the NAD(+) site. Residues Ala393, Tyr398, and 432–433 (TS) each bind UDP-alpha-D-glucuronate. Residue Glu434 is the Proton acceptor; for decarboxylase activity of the active site. UDP-alpha-D-glucuronate-binding positions include Arg460, Asn492, 526 to 535 (KLIDGGRQKR), and Tyr613. Arg619 (proton donor; for decarboxylase activity) is an active-site residue.

It in the N-terminal section; belongs to the Fmt family. UDP-L-Ara4N formyltransferase subfamily. The protein in the C-terminal section; belongs to the NAD(P)-dependent epimerase/dehydratase family. UDP-glucuronic acid decarboxylase subfamily. In terms of assembly, homohexamer, formed by a dimer of trimers.

It catalyses the reaction UDP-alpha-D-glucuronate + NAD(+) = UDP-beta-L-threo-pentopyranos-4-ulose + CO2 + NADH. It carries out the reaction UDP-4-amino-4-deoxy-beta-L-arabinose + (6R)-10-formyltetrahydrofolate = UDP-4-deoxy-4-formamido-beta-L-arabinose + (6S)-5,6,7,8-tetrahydrofolate + H(+). It functions in the pathway nucleotide-sugar biosynthesis; UDP-4-deoxy-4-formamido-beta-L-arabinose biosynthesis; UDP-4-deoxy-4-formamido-beta-L-arabinose from UDP-alpha-D-glucuronate: step 1/3. It participates in nucleotide-sugar biosynthesis; UDP-4-deoxy-4-formamido-beta-L-arabinose biosynthesis; UDP-4-deoxy-4-formamido-beta-L-arabinose from UDP-alpha-D-glucuronate: step 3/3. Its pathway is bacterial outer membrane biogenesis; lipopolysaccharide biosynthesis. Its function is as follows. Bifunctional enzyme that catalyzes the oxidative decarboxylation of UDP-glucuronic acid (UDP-GlcUA) to UDP-4-keto-arabinose (UDP-Ara4O) and the addition of a formyl group to UDP-4-amino-4-deoxy-L-arabinose (UDP-L-Ara4N) to form UDP-L-4-formamido-arabinose (UDP-L-Ara4FN). The modified arabinose is attached to lipid A and is required for resistance to polymyxin and cationic antimicrobial peptides. The sequence is that of Bifunctional polymyxin resistance protein ArnA from Enterobacter sp. (strain 638).